The chain runs to 353 residues: Protein RecA (353 aa).

An ATP-binding site is contributed by 65-72 (GPESSGKT). Residues 334 to 345 (DAERAGAEREDN) show a composition bias toward basic and acidic residues. A disordered region spans residues 334-353 (DAERAGAEREDNAAADDENF).

Belongs to the RecA family.

Its subcellular location is the cytoplasm. In terms of biological role, can catalyze the hydrolysis of ATP in the presence of single-stranded DNA, the ATP-dependent uptake of single-stranded DNA by duplex DNA, and the ATP-dependent hybridization of homologous single-stranded DNAs. It interacts with LexA causing its activation and leading to its autocatalytic cleavage. In Edwardsiella ictaluri (strain 93-146), this protein is Protein RecA.